A 660-amino-acid polypeptide reads, in one-letter code: DNA mismatch repair protein MutL (660 aa).

A disordered region spans residues 414–433; it reads SSVKHASRPQNTFTETDHPN.

Belongs to the DNA mismatch repair MutL/HexB family.

This protein is involved in the repair of mismatches in DNA. It is required for dam-dependent methyl-directed DNA mismatch repair. May act as a 'molecular matchmaker', a protein that promotes the formation of a stable complex between two or more DNA-binding proteins in an ATP-dependent manner without itself being part of a final effector complex. This is DNA mismatch repair protein MutL from Streptococcus pyogenes serotype M5 (strain Manfredo).